A 143-amino-acid polypeptide reads, in one-letter code: 3-dehydroquinate dehydratase (143 aa).

The Proton acceptor role is filled by tyrosine 22. The substrate site is built by asparagine 73, histidine 79, and aspartate 86. The Proton donor role is filled by histidine 99. Residues 100 to 101 (IS) and arginine 110 each bind substrate.

The protein belongs to the type-II 3-dehydroquinase family. In terms of assembly, homododecamer.

It carries out the reaction 3-dehydroquinate = 3-dehydroshikimate + H2O. The protein operates within metabolic intermediate biosynthesis; chorismate biosynthesis; chorismate from D-erythrose 4-phosphate and phosphoenolpyruvate: step 3/7. Catalyzes a trans-dehydration via an enolate intermediate. In Mycolicibacterium paratuberculosis (strain ATCC BAA-968 / K-10) (Mycobacterium paratuberculosis), this protein is 3-dehydroquinate dehydratase.